The following is a 314-amino-acid chain: DNA-directed RNA polymerase subunit alpha (314 aa).

An alpha N-terminal domain (alpha-NTD) region spans residues 1–227; that stretch reads MTYFQIECVE…SLFYPLTNLN (227 aa). An alpha C-terminal domain (alpha-CTD) region spans residues 239 to 314; sequence EEEINQVLIE…LPKEKNIQNT (76 aa).

This sequence belongs to the RNA polymerase alpha chain family. In plastids the minimal PEP RNA polymerase catalytic core is composed of four subunits: alpha, beta, beta', and beta''. When a (nuclear-encoded) sigma factor is associated with the core the holoenzyme is formed, which can initiate transcription.

Its subcellular location is the plastid. The protein resides in the chloroplast. It catalyses the reaction RNA(n) + a ribonucleoside 5'-triphosphate = RNA(n+1) + diphosphate. Its function is as follows. DNA-dependent RNA polymerase catalyzes the transcription of DNA into RNA using the four ribonucleoside triphosphates as substrates. The protein is DNA-directed RNA polymerase subunit alpha of Gracilaria tenuistipitata var. liui (Red alga).